The following is an 84-amino-acid chain: Small ribosomal subunit protein uS17 (84 aa).

The protein belongs to the universal ribosomal protein uS17 family. In terms of assembly, part of the 30S ribosomal subunit.

Functionally, one of the primary rRNA binding proteins, it binds specifically to the 5'-end of 16S ribosomal RNA. The protein is Small ribosomal subunit protein uS17 of Thermoanaerobacter pseudethanolicus (strain ATCC 33223 / 39E) (Clostridium thermohydrosulfuricum).